Consider the following 647-residue polypeptide: Pre-mRNA-splicing factor SLU7 (647 aa).

Residues 1–19 (MASYKQNLPPSALIKQQVN) show a composition bias toward polar residues. Residues 1-44 (MASYKQNLPPSALIKQQVNVADKKSKAEVQRDRQLEEDRKAGTA) are disordered. Basic and acidic residues predominate over residues 21-41 (ADKKSKAEVQRDRQLEEDRKA). The CCHC-type zinc finger occupies 113-130 (GACENCGAMGHQKRDCFD). Disordered stretches follow at residues 193 to 212 (HEMK…APKD) and 465 to 620 (EVKE…KEME). Basic and acidic residues predominate over residues 465–479 (EVKEEKEKEDSIKDE). The span at 480-491 (VAEENSDNDNDE) shows a compositional bias: acidic residues. The segment covering 513–533 (EKEREKERLIEKERRERDQRR) has biased composition (basic and acidic residues). Positions 534–555 (RDKKREKRERKKAKLGKRKRRH) are enriched in basic residues. The segment covering 588 to 606 (EKAEGMKAAREGDRGRKYN) has biased composition (basic and acidic residues).

It belongs to the SLU7 family.

The protein localises to the nucleus. In terms of biological role, participates in the second catalytic step of pre-mRNA splicing, when the free hydroxyl group of exon I attacks the 3'-splice site to generate spliced mRNA and the excised lariat intron. This chain is Pre-mRNA-splicing factor SLU7, found in Caenorhabditis elegans.